Consider the following 49-residue polypeptide: Large ribosomal subunit protein bL33A (49 aa).

It belongs to the bacterial ribosomal protein bL33 family.

The sequence is that of Large ribosomal subunit protein bL33A from Streptococcus pneumoniae (strain Hungary19A-6).